A 202-amino-acid polypeptide reads, in one-letter code: Regulator of G-protein signaling 16 (202 aa).

S-palmitoyl cysteine attachment occurs at residues cysteine 2 and cysteine 12. Residues serine 65 to alanine 181 form the RGS domain. A Phosphotyrosine; by EGFR modification is found at tyrosine 168. Tyrosine 177 carries the post-translational modification Phosphotyrosine. The segment at glutamine 183–threonine 202 is disordered.

In terms of assembly, interacts with GNAI1 and GNAQ. Interacts with GNAI3, GNAI3 and GNAO1. Palmitoylated on Cys-2 and/or Cys-12. Post-translationally, phosphorylated. Phosphorylation at Tyr-168 by EGFR enhances GTPase accelerating (GAP) activity toward GNAI1.

It is found in the membrane. Regulates G protein-coupled receptor signaling cascades. Inhibits signal transduction by increasing the GTPase activity of G protein alpha subunits, thereby driving them into their inactive GDP-bound form. Plays an important role in the phototransduction cascade by regulating the lifetime and effective concentration of activated transducin alpha. May regulate extra and intracellular mitogenic signals. The protein is Regulator of G-protein signaling 16 (RGS16) of Bos taurus (Bovine).